The primary structure comprises 702 residues: 1,4-alpha-glucan-branching enzyme (702 aa).

Position 2 is an N-acetylalanine (A2). Substrate contacts are provided by residues 62 to 63 and 91 to 93; these read NE and WAP. Residue W107 coordinates (1,4-alpha-D-glucosyl)n. 118–121 contacts substrate; sequence DYGK. Residue K143 coordinates (1,4-alpha-D-glucosyl)n. At Y173 the chain carries Phosphotyrosine. A substrate-binding site is contributed by 333-336; the sequence is EILR. The Nucleophile role is filled by D357. The active-site Proton donor is the E412.

Belongs to the glycosyl hydrolase 13 family. GlgB subfamily. In terms of assembly, monomer.

It carries out the reaction Transfers a segment of a (1-&gt;4)-alpha-D-glucan chain to a primary hydroxy group in a similar glucan chain.. Its pathway is glycan biosynthesis; glycogen biosynthesis. Its function is as follows. Glycogen-branching enzyme participates in the glycogen biosynthetic process along with glycogenin and glycogen synthase. Generates alpha-1,6-glucosidic branches from alpha-1,4-linked glucose chains, to increase solubility of the glycogen polymer. This chain is 1,4-alpha-glucan-branching enzyme (GBE1), found in Homo sapiens (Human).